A 108-amino-acid chain; its full sequence is Protein YcgL (108 aa).

The region spanning 12–96 is the YcgL domain; that stretch reads MFCVIYRSSK…PPEDLLKQHL (85 aa).

This Shigella sonnei (strain Ss046) protein is Protein YcgL.